The sequence spans 190 residues: MIRKINATIEDFEDEKVLIKIGVLTLEAYPSLNVIRYFKKGDQYEFFASLEISEWNTSLYIFKDKIERDVFESLKKVSKIGPRIASKILRKTDAEEFIQMINSQDTALLSSLPGIGKKTAERLISELSNSFSAYSTGADTQSYGNNNLKEAIEALETLGFQRYEIMKVIGQLDLEDLKTEEIIKECLTRL.

A domain I region spans residues 1–63 (MIRKINATIE…EWNTSLYIFK (63 aa)). The interval 64–138 (DKIERDVFES…NSFSAYSTGA (75 aa)) is domain II. The segment at 138 to 142 (ADTQS) is flexible linker. The segment at 143-190 (YGNNNLKEAIEALETLGFQRYEIMKVIGQLDLEDLKTEEIIKECLTRL) is domain III.

This sequence belongs to the RuvA family. As to quaternary structure, homotetramer. Forms an RuvA(8)-RuvB(12)-Holliday junction (HJ) complex. HJ DNA is sandwiched between 2 RuvA tetramers; dsDNA enters through RuvA and exits via RuvB. An RuvB hexamer assembles on each DNA strand where it exits the tetramer. Each RuvB hexamer is contacted by two RuvA subunits (via domain III) on 2 adjacent RuvB subunits; this complex drives branch migration. In the full resolvosome a probable DNA-RuvA(4)-RuvB(12)-RuvC(2) complex forms which resolves the HJ.

The protein resides in the cytoplasm. Its function is as follows. The RuvA-RuvB-RuvC complex processes Holliday junction (HJ) DNA during genetic recombination and DNA repair, while the RuvA-RuvB complex plays an important role in the rescue of blocked DNA replication forks via replication fork reversal (RFR). RuvA specifically binds to HJ cruciform DNA, conferring on it an open structure. The RuvB hexamer acts as an ATP-dependent pump, pulling dsDNA into and through the RuvAB complex. HJ branch migration allows RuvC to scan DNA until it finds its consensus sequence, where it cleaves and resolves the cruciform DNA. The sequence is that of Holliday junction branch migration complex subunit RuvA from Petrotoga mobilis (strain DSM 10674 / SJ95).